Reading from the N-terminus, the 90-residue chain is Probable Fe(2+)-trafficking protein (90 aa).

It belongs to the Fe(2+)-trafficking protein family. Monomer.

Could be a mediator in iron transactions between iron acquisition and iron-requiring processes, such as synthesis and/or repair of Fe-S clusters in biosynthetic enzymes. The protein is Probable Fe(2+)-trafficking protein of Enterobacter sp. (strain 638).